Reading from the N-terminus, the 1342-residue chain is DNA-directed RNA polymerase subunit beta (1342 aa).

2 positions are modified to N6-acetyllysine: Lys-1022 and Lys-1200.

The protein belongs to the RNA polymerase beta chain family. As to quaternary structure, the RNAP catalytic core consists of 2 alpha, 1 beta, 1 beta' and 1 omega subunit. When a sigma factor is associated with the core the holoenzyme is formed, which can initiate transcription.

The catalysed reaction is RNA(n) + a ribonucleoside 5'-triphosphate = RNA(n+1) + diphosphate. Functionally, DNA-dependent RNA polymerase catalyzes the transcription of DNA into RNA using the four ribonucleoside triphosphates as substrates. This Escherichia coli O81 (strain ED1a) protein is DNA-directed RNA polymerase subunit beta.